The following is a 572-amino-acid chain: Putative two-component response regulator ARR13 (572 aa).

The 118-residue stretch at 17–134 folds into the Response regulatory domain; that stretch reads NVMVVDDNRV…DLPKIYQFAL (118 aa). D71 bears the 4-aspartylphosphate mark. Residues 175 to 225 form a disordered region; sequence KKNCSSKSDTRTVNSTNVSHVSTNGSRKNRKRKPKGGPSDDGESLSQPPKK. The span at 179–197 shows a compositional bias: polar residues; that stretch reads SSKSDTRTVNSTNVSHVST. Residues 224 to 227 carry the Nuclear localization signal motif; the sequence is KKKK. Positions 227–277 form a DNA-binding region, myb-like GARP; sequence KIWWTNPLQDLFLQAIQHIGYDKVVPKKILAIMNVPYLTRENVASHLQKYR. Positions 509–522 are enriched in polar residues; that stretch reads NQDQSNGESSNTIA. Residues 509–531 are disordered; the sequence is NQDQSNGESSNTIATPETNTPNF.

Belongs to the ARR family. Type-B subfamily. Binds the target DNA as a monomer. Two-component system major event consists of a His-to-Asp phosphorelay between a sensor histidine kinase (HK) and a response regulator (RR). In plants, the His-to-Asp phosphorelay involves an additional intermediate named Histidine-containing phosphotransfer protein (HPt). This multistep phosphorelay consists of a His-Asp-His-Asp sequential transfer of a phosphate group between first a His and an Asp of the HK protein, followed by the transfer to a conserved His of the HPt protein and finally the transfer to an Asp in the receiver domain of the RR protein.

Its subcellular location is the nucleus. Its function is as follows. Putative transcriptional activator that binds specifically to the DNA sequence 5'-[AG]GATT-3'. Functions as a response regulator involved in His-to-Asp phosphorelay signal transduction system. Phosphorylation of the Asp residue in the receiver domain activates the ability of the protein to promote the transcription of target genes. Could directly activate some type-A response regulators in response to cytokinins. This chain is Putative two-component response regulator ARR13 (ARR13), found in Arabidopsis thaliana (Mouse-ear cress).